The primary structure comprises 88 residues: Stannin (88 aa).

The Mitochondrial intermembrane portion of the chain corresponds to 1–10; the sequence is MSIMDHSPTT. The chain crosses the membrane as a helical span at residues 11–31; the sequence is GVVTVIVILIAIAALGALILG. Residues 32–88 lie on the Cytoplasmic side of the membrane; it reads CWCYLRLQRISQSEDEESIVGDGETKEPFLLVQYSAKGPCVERKAKLMTANSPEVHG. A phosphoserine mark is found at Ser-49 and Ser-83.

This sequence belongs to the stannin family. As to quaternary structure, monomer.

It localises to the mitochondrion outer membrane. Plays a role in the toxic effects of organotins. Plays a role in endosomal maturation. In Mus musculus (Mouse), this protein is Stannin (Snn).